Here is a 143-residue protein sequence, read N- to C-terminus: AP-2 complex subunit sigma (143 aa).

The protein belongs to the adaptor complexes small subunit family. Adaptor protein complex 2 (AP-2) is a heterotetramer composed of two large adaptins (alpha-type subunit APL3 and beta-type subunit APL1), a medium chain (mu-type subunit APM4) and a small adaptin (sigma-type subunit APS2).

The protein localises to the cell membrane. It localises to the membrane. It is found in the coated pit. In terms of biological role, component of the adaptor complexes which link clathrin to receptors in coated vesicles. Clathrin-associated protein complexes are believed to interact with the cytoplasmic tails of membrane proteins, leading to their selection and concentration. The sequence is that of AP-2 complex subunit sigma (APS2) from Gibberella zeae (strain ATCC MYA-4620 / CBS 123657 / FGSC 9075 / NRRL 31084 / PH-1) (Wheat head blight fungus).